A 439-amino-acid chain; its full sequence is GTPase Der (439 aa).

2 EngA-type G domains span residues 4 to 168 (PIVA…KDDE) and 177 to 352 (INIA…DNYT). GTP-binding positions include 10–17 (GRPNVGKS), 57–61 (DTGGI), 120–123 (NKID), 183–190 (GKPNVGKS), 230–234 (DTAGL), and 295–298 (NKWD). The region spanning 353-437 (KRVKTGVLND…GIKTEFRERK (85 aa)) is the KH-like domain.

Belongs to the TRAFAC class TrmE-Era-EngA-EngB-Septin-like GTPase superfamily. EngA (Der) GTPase family. In terms of assembly, associates with the 50S ribosomal subunit.

In terms of biological role, GTPase that plays an essential role in the late steps of ribosome biogenesis. This Clostridium botulinum (strain Loch Maree / Type A3) protein is GTPase Der.